A 21-amino-acid polypeptide reads, in one-letter code: SVTADNASETKVREIGQEKSS.

A disordered region spans residues 1 to 21 (SVTADNASETKVREIGQEKSS). Positions 8 to 21 (SETKVREIGQEKSS) are enriched in basic and acidic residues.

It belongs to the bacterial/plant glucose-1-phosphate adenylyltransferase family. As to quaternary structure, heterotetramer.

Its subcellular location is the plastid. The protein resides in the chloroplast. It is found in the amyloplast. The catalysed reaction is alpha-D-glucose 1-phosphate + ATP + H(+) = ADP-alpha-D-glucose + diphosphate. Its pathway is glycan biosynthesis; starch biosynthesis. Activated by 3'phosphoglycerate, inhibited by orthophosphate. Allosteric regulation. In terms of biological role, this protein plays a role in synthesis of starch. It catalyzes the synthesis of the activated glycosyl donor, ADP-glucose from Glc-1-P and ATP. In Spinacia oleracea (Spinach), this protein is Glucose-1-phosphate adenylyltransferase large subunit.